Reading from the N-terminus, the 444-residue chain is MAKKYFGTDGVRGEVGQFPITPDFVLKLGYAAGQVLVQHDTDQKPTVLIGKDTRISGYMLEAALVAGFTAAGVNVVQTGPLPTPGVAYLTRALRLSAGVMISASHNAYSDNGIKFFAEGGVKLSDEVELEIEAKIDGEMKTQPSARLGRARRISGADDRYIEFCKSTFPSHSDLRGLKLVVDTANGAGYGVAPKVFHELGAQVVSIGNEPNGYNINEKCGATYTKTLQAAVLQHEADYGIALDGDGDRLMMVDKNGQVYDGDSLIYVIAKARAREGINIGGVVGTVMTNMAMEIALKEQGVDFCRAKVGDRYVLEQLNQRGWLIGGEASGHILCMDKHNTGDGIISALQVLAALQTLNQDLATVCADWQPYPQTMINVRIQKGQQWQEASKDVLAEVEKELEGKGRVVLRASGTEPVVRVMVEARQADWAREGAERIAAAIGGI.

The active-site Phosphoserine intermediate is the serine 104. Serine 104, aspartate 243, aspartate 245, and aspartate 247 together coordinate Mg(2+). The residue at position 104 (serine 104) is a Phosphoserine.

This sequence belongs to the phosphohexose mutase family. Mg(2+) is required as a cofactor. Activated by phosphorylation.

The catalysed reaction is alpha-D-glucosamine 1-phosphate = D-glucosamine 6-phosphate. Catalyzes the conversion of glucosamine-6-phosphate to glucosamine-1-phosphate. The sequence is that of Phosphoglucosamine mutase from Neisseria meningitidis serogroup B (strain ATCC BAA-335 / MC58).